The following is a 113-amino-acid chain: Protein S100-A9 (113 aa).

At alanine 2 the chain carries N-acetylalanine. EF-hand domains follow at residues 13-48 and 55-90; these read ITTI…QLAT and RNEA…LIFA. Residue histidine 21 participates in Zn(2+) binding. Positions 24 and 29 each coordinate Ca(2+). Aspartate 31 serves as a coordination point for Zn(2+). Residues threonine 32, glutamate 37, aspartate 68, asparagine 70, aspartate 72, glutamine 74, and glutamate 79 each contribute to the Ca(2+) site. Zn(2+) contacts are provided by histidine 92 and histidine 96. The residue at position 107 (histidine 107) is a Pros-methylhistidine.

This sequence belongs to the S-100 family. Homodimer. Preferentially exists as a heterodimer or heterotetramer with S100A8 known as calprotectin (S100A8/A9). S100A9 interacts with ATP2A2. S100A9 interacts with AGER, and with the heterodimeric complex formed by TLR4 and LY96 in the presence of calcium and/or zinc ions. S100A9 binds quinoline-3-carboxamides in the presence of calcium and/or zinc ions. S100A9 interacts with amyloid-beta protein 40. Calprotectin (S100A8/9) interacts with CEACAM3 and tubulin filaments in a calcium-dependent manner. Heterotetrameric calprotectin (S100A8/A9) interacts with ANXA6 and associates with tubulin filaments in activated monocytes. Calprotectin (S100A8/9) interacts with NCF2/P67PHOX, RAC1, RAC2, CYBA and CYBB. Calprotectin (S100A8/9) interacts with NOS2 to form the iNOS-S100A8/A9 transnitrosylase complex; induced by LDL(ox). Calprotectin (S100A8/9) interacts with CD69. Phosphorylated. Phosphorylation inhibits activation of tubulin polymerization. Post-translationally, methylation at His-107 by METTL9 reduces zinc-binding without affecting heterodimerization with S100A8.

The protein localises to the secreted. It is found in the cytoplasm. The protein resides in the cytoskeleton. Its subcellular location is the cell membrane. S100A9 is a calcium- and zinc-binding protein which plays a prominent role in the regulation of inflammatory processes and immune response. It can induce neutrophil chemotaxis, adhesion, can increase the bactericidal activity of neutrophils by promoting phagocytosis via activation of SYK, PI3K/AKT, and ERK1/2 and can induce degranulation of neutrophils by a MAPK-dependent mechanism. Predominantly found as calprotectin (S100A8/A9) which has a wide plethora of intra- and extracellular functions. The intracellular functions include: facilitating leukocyte arachidonic acid trafficking and metabolism, modulation of the tubulin-dependent cytoskeleton during migration of phagocytes and activation of the neutrophilic NADPH-oxidase. Also participates in regulatory T-cell differentiation together with CD69. Activates NADPH-oxidase by facilitating the enzyme complex assembly at the cell membrane, transferring arachidonic acid, an essential cofactor, to the enzyme complex and S100A8 contributes to the enzyme assembly by directly binding to NCF2/P67PHOX. The extracellular functions involve pro-inflammatory, antimicrobial, oxidant-scavenging and apoptosis-inducing activities. Its pro-inflammatory activity includes recruitment of leukocytes, promotion of cytokine and chemokine production, and regulation of leukocyte adhesion and migration. Acts as an alarmin or a danger associated molecular pattern (DAMP) molecule and stimulates innate immune cells via binding to pattern recognition receptors such as Toll-like receptor 4 (TLR4) and receptor for advanced glycation endproducts (AGER). Binding to TLR4 and AGER activates the MAP-kinase and NF-kappa-B signaling pathways resulting in the amplification of the pro-inflammatory cascade. Has antimicrobial activity towards bacteria and fungi and exerts its antimicrobial activity probably via chelation of Zn(2+) which is essential for microbial growth. Can induce cell death via autophagy and apoptosis and this occurs through the cross-talk of mitochondria and lysosomes via reactive oxygen species (ROS) and the process involves BNIP3. Can regulate neutrophil number and apoptosis by an anti-apoptotic effect; regulates cell survival via ITGAM/ITGB and TLR4 and a signaling mechanism involving MEK-ERK. Its role as an oxidant scavenger has a protective role in preventing exaggerated tissue damage by scavenging oxidants. The iNOS-S100A8/A9 transnitrosylase complex is proposed to direct selective inflammatory stimulus-dependent S-nitrosylation of multiple targets such as GAPDH, NXA5, EZR, MSN and VIM by recognizing a [IL]-x-C-x-x-[DE] motif. The polypeptide is Protein S100-A9 (S100a9) (Mus musculus (Mouse)).